Consider the following 230-residue polypeptide: RNA chaperone ProQ (230 aa).

A disordered region spans residues 104-176; that stretch reads AEAKARVQAQ…APRQNTEKLT (73 aa). The segment covering 115-132 has biased composition (basic and acidic residues); the sequence is AEQRAKKREAEGDKETSK.

The protein belongs to the ProQ family.

It is found in the cytoplasm. In terms of biological role, RNA chaperone with significant RNA binding, RNA strand exchange and RNA duplexing activities. May regulate ProP activity through an RNA-based, post-transcriptional mechanism. The protein is RNA chaperone ProQ of Proteus mirabilis (strain HI4320).